A 939-amino-acid chain; its full sequence is cGMP-dependent 3',5'-cyclic phosphodiesterase (939 aa).

Glycine 2 carries the N-myristoyl glycine lipid modification. Residues cysteine 5 and cysteine 11 are each lipidated (S-palmitoyl cysteine). A disordered region spans residues 16–38 (YPAARPAEPRGQQVFLKPDEPPP). Serine 116 is modified (phosphoserine). Residues 197-217 (PEAVQNTSVDASEDQKDEKGY) form a disordered region. GAF domains are found at residues 236 to 373 (ATSL…HYTG) and 408 to 547 (DVSV…GISI). Serine 430, aspartate 445, isoleucine 464, tyrosine 487, and threonine 498 together coordinate 3',5'-cyclic GMP. Residues 577-901 (SDDEYTKLLH…EHWTKVSHKF (325 aa)) form the PDEase domain. Histidine 655 serves as the catalytic Proton donor. Zn(2+) contacts are provided by histidine 659, histidine 695, aspartate 696, and aspartate 807. Aspartate 696 is a binding site for Mg(2+).

It belongs to the cyclic nucleotide phosphodiesterase family. PDE2 subfamily. Homodimer. It depends on Zn(2+) as a cofactor. Mg(2+) is required as a cofactor. Expressed in brain and liver (at protein level).

The protein resides in the cytoplasm. It is found in the mitochondrion matrix. The protein localises to the mitochondrion inner membrane. Its subcellular location is the mitochondrion outer membrane. It localises to the cell membrane. The catalysed reaction is a nucleoside 3',5'-cyclic phosphate + H2O = a nucleoside 5'-phosphate + H(+). The enzyme catalyses 3',5'-cyclic GMP + H2O = GMP + H(+). It catalyses the reaction 3',5'-cyclic AMP + H2O = AMP + H(+). The 3',5'-cyclic-AMP phosphodiesterase activity is stimulated by 3',5'-cyclic GMP. Specifically inhibited by Bay 60-7550. CGMP-activated cyclic nucleotide phosphodiesterase with a dual-specificity for the second messengers cAMP and cGMP, which are key regulators of many important physiological processes. Has a higher efficiency with cGMP compared to cAMP. Plays a role in cell growth and migration. Its function is as follows. Regulates mitochondrial cAMP levels and respiration. Involved in the regulation of mitochondria morphology/dynamics and apoptotic cell death via local modulation of cAMP/PKA signaling in the mitochondrion, including the monitoring of local cAMP levels at the outer mitochondrial membrane and of PKA-dependent phosphorylation of DNM1L. This is cGMP-dependent 3',5'-cyclic phosphodiesterase from Mus musculus (Mouse).